The chain runs to 151 residues: Large ribosomal subunit protein bL9 (151 aa).

The protein belongs to the bacterial ribosomal protein bL9 family.

Binds to the 23S rRNA. This is Large ribosomal subunit protein bL9 from Bordetella pertussis (strain Tohama I / ATCC BAA-589 / NCTC 13251).